Here is a 209-residue protein sequence, read N- to C-terminus: Adenylate kinase (209 aa).

59 to 64 (GSGKRT) provides a ligand contact to ATP. Residues 79-108 (SSGQVLTRGVESGSETSQLAHSYVSRGERV) are NMP. Residues Ser-80, 106-108 (ERV), 135-138 (GYPR), and Gln-142 each bind AMP. An LID region spans residues 172 to 205 (HRRYDPATNKXYHMLDNPPPGGRCRVMRTAPAEG). Arg-173 serves as a coordination point for ATP.

It belongs to the adenylate kinase family. As to quaternary structure, monomer.

It localises to the cytoplasm. The catalysed reaction is AMP + ATP = 2 ADP. In terms of biological role, catalyzes the reversible transfer of the terminal phosphate group between ATP and AMP. Plays an important role in cellular energy homeostasis and in adenine nucleotide metabolism. This chain is Adenylate kinase, found in Trypanosoma brucei rhodesiense.